The following is a 440-amino-acid chain: Methylthioribose-1-phosphate isomerase (440 aa).

Catalysis depends on D285, which acts as the Proton donor.

This sequence belongs to the eIF-2B alpha/beta/delta subunits family. MtnA subfamily.

It is found in the cytoplasm. The protein localises to the nucleus. It carries out the reaction 5-(methylsulfanyl)-alpha-D-ribose 1-phosphate = 5-(methylsulfanyl)-D-ribulose 1-phosphate. Its pathway is amino-acid biosynthesis; L-methionine biosynthesis via salvage pathway; L-methionine from S-methyl-5-thio-alpha-D-ribose 1-phosphate: step 1/6. Functionally, catalyzes the interconversion of methylthioribose-1-phosphate (MTR-1-P) into methylthioribulose-1-phosphate (MTRu-1-P). The protein is Methylthioribose-1-phosphate isomerase (mri1) of Botryotinia fuckeliana (strain B05.10) (Noble rot fungus).